The following is an 83-amino-acid chain: Small ribosomal subunit protein bS16 (83 aa).

It belongs to the bacterial ribosomal protein bS16 family.

In Shewanella halifaxensis (strain HAW-EB4), this protein is Small ribosomal subunit protein bS16.